The following is a 614-amino-acid chain: MATMKSLIGLINKIQRACTVLGDHGGEGMSLWEALPTVAVVGGQSSGKSSVLESVVGRDFLPRGSGIVTRRPLVLQLHKTEDGTTEYAEFLHAPKKRFADFAAVRKEIEDETDRITGKSKQISNIPIQLSIYSPNVVNLTLIDLPGLTKVAVDGQPESIVQDIENMVRSYVEKPNCIILAISPANQDIATSDAIKLAREVDPTGERTFGVATKLDIMDKGTDCLDVLEGRSYRLQHPWVGIVNRSQADINKRVDMIAARRKEQEYFETSPEYGHLASRMGSEYLAKLLSQHLETVIRQKIPSIVALINKSIDEINAELDRIGRPIAVDSGAQLYTILELCRAFDRVFKEHLDGGRPGGDRIYGVFDHQLPAALKKLPFDRHLSTKNVQKVVSEADGYQPHLIAPEQGYRRLIDGSISYFKGPAEATVDAVHFVLKELVRKSISETEELKRFPTLASDIAAAANEALERFRDESRKTVLRLVDMESSYLTVEFFRKLHLEPEKEKPNPRNAPAPNADPYSDNHFRKIGSNVSAYINMVCDTLRNSLPKAVVYCQVREAKRSLLNFFYAQVGRKEKEKLGAMLDEDPQLMERRGTLAKRLELYKQARDDIDAVAWK.

A Dynamin-type G domain is found at 32 to 301 (WEALPTVAVV…LETVIRQKIP (270 aa)). The segment at 42–49 (GGQSSGKS) is G1 motif. Residue 45 to 50 (SSGKSS) participates in GTP binding. The G2 motif stretch occupies residues 68 to 70 (VTR). The interval 143–146 (DLPG) is G3 motif. Residues 212 to 215 (TKLD) are G4 motif. GTP is bound by residues 213–218 (KLDIMD) and 243–246 (NRSQ). A G5 motif region spans residues 242–245 (VNRS). Residues 499–519 (EPEKEKPNPRNAPAPNADPYS) form a disordered region. The span at 507–517 (PRNAPAPNADP) shows a compositional bias: low complexity. Residues 523-614 (FRKIGSNVSA…RDDIDAVAWK (92 aa)) form the GED domain.

This sequence belongs to the TRAFAC class dynamin-like GTPase superfamily. Dynamin/Fzo/YdjA family. As to quaternary structure, forms homodimer and may homooligomerize and heterooligomerize to form the phragmoplastin complex. Binds to PHIP1. In terms of tissue distribution, ubiquitous.

It localises to the cytoplasm. Its subcellular location is the cytoskeleton. The protein resides in the cell cortex. It is found in the cytoplasmic vesicle. The protein localises to the clathrin-coated vesicle. It localises to the phragmoplast. The enzyme catalyses GTP + H2O = GDP + phosphate + H(+). Its function is as follows. Microtubule-associated force-producing protein that is targeted to the growing edges of the cell plate during cytokinesis. Also plays a major role in plasma membrane maintenance during pollen maturation. Has a GTPase activity. The sequence is that of Phragmoplastin DRP1C from Arabidopsis thaliana (Mouse-ear cress).